The sequence spans 831 residues: Protein ADP-ribosyltransferase PARP3 (831 aa).

The disordered stretch occupies residues 1–69; the sequence is MVHETRSRTL…KKLKAEESDL (69 aa). Basic and acidic residues-rich tracts occupy residues 15–32 and 43–66; these read EEGK…KEQE and KTAD…KAEE. Residues 49–199 enclose the PADR1 zinc-binding domain; sequence EHDGEQEPSK…NKYPKRNLDD (151 aa). A zinc ribbon region spans residues 124 to 168; that stretch reads GPLDKCPVCGGQLECKGLKYNCTGTHSEWACCSFSTNNPSRRGGP. Zn(2+)-binding residues include Cys-129, Cys-132, Cys-145, and Cys-155. The BRCT domain maps to 200-290; that stretch reads EGIFSGMMIA…EKQPLAAYDI (91 aa). Residues 338-439 form the WGR domain; sequence GGHIYEKDGI…KKFKKKCMKM (102 aa). In terms of domain architecture, PARP alpha-helical spans 466–585; the sequence is HCKLDPSVTF…DINVASRLIG (120 aa). Residues 594 to 827 enclose the PARP catalytic domain; that stretch reads DPLSQCYKKL…VKYEEQNMEV (234 aa).

The protein belongs to the ARTD/PARP family.

It is found in the nucleus. It carries out the reaction L-aspartyl-[protein] + NAD(+) = 4-O-(ADP-D-ribosyl)-L-aspartyl-[protein] + nicotinamide. It catalyses the reaction L-glutamyl-[protein] + NAD(+) = 5-O-(ADP-D-ribosyl)-L-glutamyl-[protein] + nicotinamide. Involved in the base excision repair (BER) pathway, by catalyzing the poly(ADP-ribosyl)ation of a limited number of acceptor proteins involved in chromatin architecture and in DNA metabolism. This modification follows DNA damages and appears as an obligatory step in a detection/signaling pathway leading to the reparation of DNA strand breaks. This is Protein ADP-ribosyltransferase PARP3 (PARP3) from Oryza sativa subsp. japonica (Rice).